The sequence spans 550 residues: Glutamyl-tRNA(Gln) amidotransferase subunit A, mitochondrial (550 aa).

Residues K79 and S171 each act as charge relay system in the active site. Residue S195 is the Acyl-ester intermediate of the active site. A disordered region spans residues 371–390; it reads EKDENKVDNDNDDDDDVDEN.

The protein belongs to the amidase family. GatA subfamily. In terms of assembly, subunit of the heterotrimeric GatCAB amidotransferase (AdT) complex, composed of A, B and C subunits.

Its subcellular location is the mitochondrion. It catalyses the reaction L-glutamyl-tRNA(Gln) + L-glutamine + ATP + H2O = L-glutaminyl-tRNA(Gln) + L-glutamate + ADP + phosphate + H(+). Functionally, allows the formation of correctly charged Gln-tRNA(Gln) through the transamidation of misacylated Glu-tRNA(Gln) in the mitochondria. The reaction takes place in the presence of glutamine and ATP through an activated gamma-phospho-Glu-tRNA(Gln). The polypeptide is Glutamyl-tRNA(Gln) amidotransferase subunit A, mitochondrial (Dictyostelium discoideum (Social amoeba)).